We begin with the raw amino-acid sequence, 1192 residues long: Outer capsid protein VP2 (1192 aa).

The interval 1112–1192 (IDQFMLDDMP…QSVAKPGIVR (81 aa)) is disordered. Residues 1140–1150 (PSAAANTEAST) show a composition bias toward low complexity. The span at 1159–1183 (NVVSPTVPGQPSQTPVNPNQSTELQ) shows a compositional bias: polar residues.

The protein localises to the virion. It catalyses the reaction a 5'-end diphospho-ribonucleoside in mRNA + GTP + H(+) = a 5'-end (5'-triphosphoguanosine)-ribonucleoside in mRNA + diphosphate. The enzyme catalyses a 5'-end (5'-triphosphoguanosine)-ribonucleoside in mRNA + S-adenosyl-L-methionine = a 5'-end (N(7)-methyl 5'-triphosphoguanosine)-ribonucleoside in mRNA + S-adenosyl-L-homocysteine. In terms of biological role, outer capsid protein involved in mRNA capping. Catalyzes the last 3 enzymatic activities for formation of the 5' cap structure on the viral plus-strand transcripts, namely the RNA guanylyltransferase, RNA-7N- and RNA-2'O-methyltransferase activities. This Rice ragged stunt virus (isolate Thailand) (RRSV) protein is Outer capsid protein VP2 (S2).